The primary structure comprises 437 residues: Adenylosuccinate lyase (437 aa).

N(6)-(1,2-dicarboxyethyl)-AMP is bound by residues 4–5, 70–72, and 96–97; these read RY, KHD, and TS. His-144 acts as the Proton donor/acceptor in catalysis. Gln-215 provides a ligand contact to N(6)-(1,2-dicarboxyethyl)-AMP. Catalysis depends on Ser-265, which acts as the Proton donor/acceptor. N(6)-(1,2-dicarboxyethyl)-AMP contacts are provided by residues Ser-266, 271–273, and 310–314; these read KKN and SVERV.

This sequence belongs to the lyase 1 family. Adenylosuccinate lyase subfamily. As to quaternary structure, homooligomer. Residues from neighboring subunits contribute catalytic and substrate-binding residues to each active site.

It carries out the reaction N(6)-(1,2-dicarboxyethyl)-AMP = fumarate + AMP. It catalyses the reaction (2S)-2-[5-amino-1-(5-phospho-beta-D-ribosyl)imidazole-4-carboxamido]succinate = 5-amino-1-(5-phospho-beta-D-ribosyl)imidazole-4-carboxamide + fumarate. It functions in the pathway purine metabolism; AMP biosynthesis via de novo pathway; AMP from IMP: step 2/2. Its pathway is purine metabolism; IMP biosynthesis via de novo pathway; 5-amino-1-(5-phospho-D-ribosyl)imidazole-4-carboxamide from 5-amino-1-(5-phospho-D-ribosyl)imidazole-4-carboxylate: step 2/2. In terms of biological role, catalyzes two reactions in de novo purine nucleotide biosynthesis. Catalyzes the breakdown of 5-aminoimidazole- (N-succinylocarboxamide) ribotide (SAICAR or 2-[5-amino-1-(5-phospho-beta-D-ribosyl)imidazole-4-carboxamido]succinate) to 5-aminoimidazole-4-carboxamide ribotide (AICAR or 5-amino-1-(5-phospho-beta-D-ribosyl)imidazole-4-carboxamide) and fumarate, and of adenylosuccinate (ADS or N(6)-(1,2-dicarboxyethyl)-AMP) to adenosine monophosphate (AMP) and fumarate. The chain is Adenylosuccinate lyase (purB) from Aquifex aeolicus (strain VF5).